A 948-amino-acid polypeptide reads, in one-letter code: Sensor histidine kinase RcsC (948 aa).

Over 1–20 the chain is Cytoplasmic; sequence MKYLASFRTTLKVSRYLFRA. Residues 21–41 form a helical membrane-spanning segment; it reads LALLIWLLIAFVSVFYIVNAL. Over 42-313 the chain is Periplasmic; the sequence is HQRESEIRQE…PVDLVLERIR (272 aa). Residues 314–334 traverse the membrane as a helical segment; it reads ILILNAILLNVLVGAGLFTLA. The Cytoplasmic portion of the chain corresponds to 335–948; it reads RMYERRIFIP…YAERVRKTRA (614 aa). A PAS domain is found at 357 to 425; the sequence is QFNRKIVASA…VLTSNNTNLQ (69 aa). The 217-residue stretch at 476–692 folds into the Histidine kinase domain; the sequence is TVSHELRTPL…QFTLRIPLYG (217 aa). His479 is modified (phosphohistidine; by autocatalysis). Residues 705-805 form the ABL domain; that stretch reads AGTCCWLAVR…ARIYSIELDS (101 aa). A Response regulatory domain is found at 826-940; sequence MILVVDDHPI…VLKQTLAVYA (115 aa). Asp875 is subject to 4-aspartylphosphate.

Belongs to the RcsC family. As to quaternary structure, interacts with RcsD. In terms of processing, autophosphorylated. Activation probably requires a transfer of a phosphate group from a His in the transmitter domain to an Asp in the receiver domain.

It localises to the cell inner membrane. It catalyses the reaction ATP + protein L-histidine = ADP + protein N-phospho-L-histidine.. In terms of biological role, component of the Rcs signaling system, which controls transcription of numerous genes. RcsC functions as a membrane-associated protein kinase that phosphorylates RcsD in response to environmental signals. The phosphoryl group is then transferred to the response regulator RcsB. The sequence is that of Sensor histidine kinase RcsC from Salmonella typhimurium (strain LT2 / SGSC1412 / ATCC 700720).